The following is a 251-amino-acid chain: Adenosylcobinamide-GDP ribazoletransferase (251 aa).

Helical transmembrane passes span Phe29 to Val49, Ser65 to Met85, Ala110 to Leu130, Leu136 to Tyr156, Ala175 to Phe195, and Leu198 to Trp218.

The protein belongs to the CobS family. Requires Mg(2+) as cofactor.

Its subcellular location is the cell inner membrane. The catalysed reaction is alpha-ribazole + adenosylcob(III)inamide-GDP = adenosylcob(III)alamin + GMP + H(+). It catalyses the reaction alpha-ribazole 5'-phosphate + adenosylcob(III)inamide-GDP = adenosylcob(III)alamin 5'-phosphate + GMP + H(+). It functions in the pathway cofactor biosynthesis; adenosylcobalamin biosynthesis; adenosylcobalamin from cob(II)yrinate a,c-diamide: step 7/7. Joins adenosylcobinamide-GDP and alpha-ribazole to generate adenosylcobalamin (Ado-cobalamin). Also synthesizes adenosylcobalamin 5'-phosphate from adenosylcobinamide-GDP and alpha-ribazole 5'-phosphate. The chain is Adenosylcobinamide-GDP ribazoletransferase from Synechococcus elongatus (strain ATCC 33912 / PCC 7942 / FACHB-805) (Anacystis nidulans R2).